A 238-amino-acid polypeptide reads, in one-letter code: Probable RNA/DNA demethylase ALKBH6 (238 aa).

The Fe2OG dioxygenase domain maps to 96–227 (PANHVLVNQY…RVSLTIRRVP (132 aa)). 2 residues coordinate 2-oxoglutarate: Asn103 and Tyr105. 3 residues coordinate Fe cation: His114, Asp116, and His182. 2-oxoglutarate contacts are provided by Arg218 and Ser220.

This sequence belongs to the alkB family. Interacts with VCPKMT. Requires Fe(2+) as cofactor.

It is found in the cytoplasm. The protein resides in the nucleus. Its function is as follows. Probable Fe(2+)/2-oxoglutarate-dependent dioxygenase involved in oxidative demethylation of nucleic acids. Binds nucleic acids with a preference for ssDNA or ssRNA to other types of DNAs. May play a role in nucleic acid damage repair. In Mus musculus (Mouse), this protein is Probable RNA/DNA demethylase ALKBH6 (Alkbh6).